The sequence spans 371 residues: 4-hydroxy-3-methylbut-2-en-1-yl diphosphate synthase (flavodoxin) (371 aa).

Positions 268, 271, 303, and 310 each coordinate [4Fe-4S] cluster.

Belongs to the IspG family. [4Fe-4S] cluster is required as a cofactor.

It catalyses the reaction (2E)-4-hydroxy-3-methylbut-2-enyl diphosphate + oxidized [flavodoxin] + H2O + 2 H(+) = 2-C-methyl-D-erythritol 2,4-cyclic diphosphate + reduced [flavodoxin]. Its pathway is isoprenoid biosynthesis; isopentenyl diphosphate biosynthesis via DXP pathway; isopentenyl diphosphate from 1-deoxy-D-xylulose 5-phosphate: step 5/6. Converts 2C-methyl-D-erythritol 2,4-cyclodiphosphate (ME-2,4cPP) into 1-hydroxy-2-methyl-2-(E)-butenyl 4-diphosphate. The polypeptide is 4-hydroxy-3-methylbut-2-en-1-yl diphosphate synthase (flavodoxin) (Lysinibacillus sphaericus (strain C3-41)).